We begin with the raw amino-acid sequence, 56 residues long: Single-pass membrane and coiled-coil domain-containing protein 4 homolog (56 aa).

A disordered region spans residues 1–27 (MRQLPGKAAKETRKMKRERKQQNKEGH). Residues 9–31 (AKETRKMKRERKQQNKEGHNRVV) are a coiled coil. The helical transmembrane segment at 30-50 (VVTVAIPVCLAVFVMLIVYVY) threads the bilayer.

This sequence belongs to the SMCO4 family.

It is found in the membrane. The chain is Single-pass membrane and coiled-coil domain-containing protein 4 homolog from Nematostella vectensis (Starlet sea anemone).